Here is a 301-residue protein sequence, read N- to C-terminus: 4-hydroxybenzoate octaprenyltransferase (301 aa).

The next 8 helical transmembrane spans lie at 34-54 (IGSLLLLWPTWWALWLAADGL), 57-77 (LWTLLVFTAGVWLTRSAGCVI), 108-128 (LWVFVVLMLVAFALVLTLNWL), 152-172 (LPQVYLGMAFGWGIPMAFAAV), 176-196 (VPLLGWLLYAANILWATAYDT), 221-241 (FDLIAQGILYALMAATLVLVG), 245-265 (DLGVAYWAGLAVAALLVAYEF), and 279-299 (AFLHNNWVGLAIFVGIAVAVA).

Belongs to the UbiA prenyltransferase family. Mg(2+) serves as cofactor.

The protein localises to the cell inner membrane. It catalyses the reaction all-trans-octaprenyl diphosphate + 4-hydroxybenzoate = 4-hydroxy-3-(all-trans-octaprenyl)benzoate + diphosphate. The protein operates within cofactor biosynthesis; ubiquinone biosynthesis. Functionally, catalyzes the prenylation of para-hydroxybenzoate (PHB) with an all-trans polyprenyl group. Mediates the second step in the final reaction sequence of ubiquinone-8 (UQ-8) biosynthesis, which is the condensation of the polyisoprenoid side chain with PHB, generating the first membrane-bound Q intermediate 3-octaprenyl-4-hydroxybenzoate. This Xanthomonas euvesicatoria pv. vesicatoria (strain 85-10) (Xanthomonas campestris pv. vesicatoria) protein is 4-hydroxybenzoate octaprenyltransferase.